A 212-amino-acid chain; its full sequence is Acyl-homoserine-lactone synthase (212 aa).

The protein belongs to the autoinducer synthase family.

It catalyses the reaction a fatty acyl-[ACP] + S-adenosyl-L-methionine = an N-acyl-L-homoserine lactone + S-methyl-5'-thioadenosine + holo-[ACP] + H(+). In terms of biological role, required for the synthesis of OHHL (N-(3-oxohexanoyl)-L-homoserine lactone), an autoinducer molecule which binds to ExpR and thus acts in virulence (soft rot disease) through the activation of genes for plant tissue macerating enzymes. The protein is Acyl-homoserine-lactone synthase (expI) of Dickeya dadantii (strain 3937) (Erwinia chrysanthemi (strain 3937)).